Reading from the N-terminus, the 560-residue chain is Arginine--tRNA ligase (560 aa).

The 'HIGH' region motif lies at 164–174 (FYYNDAGNQID).

Belongs to the class-I aminoacyl-tRNA synthetase family. In terms of assembly, monomer.

It localises to the cytoplasm. The catalysed reaction is tRNA(Arg) + L-arginine + ATP = L-arginyl-tRNA(Arg) + AMP + diphosphate. The chain is Arginine--tRNA ligase from Bordetella pertussis (strain Tohama I / ATCC BAA-589 / NCTC 13251).